We begin with the raw amino-acid sequence, 184 residues long: Mediator of RNA polymerase II transcription subunit 28 (184 aa).

A coiled-coil region spans residues 77 to 105; the sequence is LLKEENFDLKQEIARKDELIRKHYEKIES.

It belongs to the Mediator complex subunit 28 family. In terms of assembly, component of the Mediator complex.

The protein localises to the nucleus. Functionally, component of the Mediator complex, a coactivator involved in the regulated transcription of nearly all RNA polymerase II-dependent genes. Mediator functions as a bridge to convey information from gene-specific regulatory proteins to the basal RNA polymerase II transcription machinery. Mediator is recruited to promoters by direct interactions with regulatory proteins and serves as a scaffold for the assembly of a functional preinitiation complex with RNA polymerase II and the general transcription factors. In Aedes aegypti (Yellowfever mosquito), this protein is Mediator of RNA polymerase II transcription subunit 28 (MED28).